A 196-amino-acid chain; its full sequence is MFIKCYSGGGRLLLEETLKSCPIVKRGQYHYFIHPISDGVPLVEPKLLREVAMRIIKIGNFEDVDKLVTAEAMGIPLVTTLSLYTDIPYVIMRKREYKLPGEIPVFQSTGYSKGQLYLNGIEKGDKVVIIDDVISTGGTMIAIINALKRAGAEIKDIICVIERGEGKKIVEEKTGYKIKTLVKIDVVDGKVVILRD.

Belongs to the purine/pyrimidine phosphoribosyltransferase family. Archaeal HPRT subfamily. As to quaternary structure, homodimer.

The protein localises to the cytoplasm. It catalyses the reaction IMP + diphosphate = hypoxanthine + 5-phospho-alpha-D-ribose 1-diphosphate. The enzyme catalyses GMP + diphosphate = guanine + 5-phospho-alpha-D-ribose 1-diphosphate. Its pathway is purine metabolism; IMP biosynthesis via salvage pathway; IMP from hypoxanthine: step 1/1. In terms of biological role, catalyzes a salvage reaction resulting in the formation of IMP that is energically less costly than de novo synthesis. The polypeptide is Hypoxanthine/guanine phosphoribosyltransferase (Methanocaldococcus sp. (strain FS406-22)).